The sequence spans 697 residues: MSNQQIKEKIISLNNYLKHLNHLYYDLDAPEVDDKTYDSLYNELLELEAKYPSLVLEDSVTKIIGAFVSNKFKKTKHNKEMLSLDKAYKESEIFSFYENFTQYKNLENFGFSLEPKIDGLSISIHYDNGKFIKAITRGDGTTGEDVSENVFQIRDVPKQISYLKPLEVRGEIYMKKSTWKSLNEDIKNQYFQTNIEKIFSYMQALPKSKSWSNLKIKTPIFFKNARNAAAGTLRQKDPKIVKSRNLSSLFYEIVSPLEHNLKTQMEVLAFLKEQNFEVNEFQKLAKNDQEIMFEINEFSKIKNNFEFDCDGFVIKFNLIDKWEQIGFTSKFPKWAIAYKYMLEEANTKILNIVAQVGRTGNITYIAQFMPVELNNTTVQNATLHNYEFIKKNNINIGDEITIIKSGEIIPKVISIYKKNTDSVFEKVLNCPSCNSLLEIPEGYVDQFCRNENCDEKKIQMLTFFVSKNCLNITNLSVQNIRIFYNHPVIQMREIQDIFLLKNHVDEIKKIKFFAGKSQENKKINNILQSIEKAKDAYLRNVLAALGIKGIGNIAANLLTNKITKLSDLNNLTDEDLLSIDTFGEKSIENLKEFLSSEKNQDLIKFLDENLNYLNSKKSSKLNNLNFAITGSLSISRDEFKKIILDNGGIFSNSVSKNTSYLISNSKENSTKIKKALENNIKVITEEEFHNLLKEENA.

NAD(+) is bound by residues 34–38 (DKTYD), 83–84 (SL), and Glu-114. The N6-AMP-lysine intermediate role is filled by Lys-116. NAD(+) contacts are provided by Arg-137, Glu-171, Lys-315, and Lys-339. The Zn(2+) site is built by Cys-430, Cys-433, Cys-448, and Cys-453. A BRCT domain is found at 616–697 (KKSSKLNNLN…FHNLLKEENA (82 aa)).

The protein belongs to the NAD-dependent DNA ligase family. LigA subfamily. Mg(2+) serves as cofactor. Requires Mn(2+) as cofactor.

It catalyses the reaction NAD(+) + (deoxyribonucleotide)n-3'-hydroxyl + 5'-phospho-(deoxyribonucleotide)m = (deoxyribonucleotide)n+m + AMP + beta-nicotinamide D-nucleotide.. DNA ligase that catalyzes the formation of phosphodiester linkages between 5'-phosphoryl and 3'-hydroxyl groups in double-stranded DNA using NAD as a coenzyme and as the energy source for the reaction. It is essential for DNA replication and repair of damaged DNA. The sequence is that of DNA ligase from Mycoplasmopsis synoviae (strain 53) (Mycoplasma synoviae).